Here is a 710-residue protein sequence, read N- to C-terminus: Phosphoribosylformylglycinamidine synthase subunit PurL (710 aa).

The active site involves His36. Residues Tyr39 and Lys80 each contribute to the ATP site. Glu82 provides a ligand contact to Mg(2+). Residues 83–86 (SHNH) and Arg105 contribute to the substrate site. Residue His84 is the Proton acceptor of the active site. Asp106 serves as a coordination point for Mg(2+). Gln226 provides a ligand contact to substrate. Asp252 is a Mg(2+) binding site. Substrate is bound at residue 294–296 (ETQ). Residues Asp470 and Gly507 each contribute to the ATP site. Ser510 contacts substrate.

This sequence belongs to the FGAMS family. In terms of assembly, monomer. Part of the FGAM synthase complex composed of 1 PurL, 1 PurQ and 2 PurS subunits.

The protein resides in the cytoplasm. It catalyses the reaction N(2)-formyl-N(1)-(5-phospho-beta-D-ribosyl)glycinamide + L-glutamine + ATP + H2O = 2-formamido-N(1)-(5-O-phospho-beta-D-ribosyl)acetamidine + L-glutamate + ADP + phosphate + H(+). The protein operates within purine metabolism; IMP biosynthesis via de novo pathway; 5-amino-1-(5-phospho-D-ribosyl)imidazole from N(2)-formyl-N(1)-(5-phospho-D-ribosyl)glycinamide: step 1/2. Its function is as follows. Part of the phosphoribosylformylglycinamidine synthase complex involved in the purines biosynthetic pathway. Catalyzes the ATP-dependent conversion of formylglycinamide ribonucleotide (FGAR) and glutamine to yield formylglycinamidine ribonucleotide (FGAM) and glutamate. The FGAM synthase complex is composed of three subunits. PurQ produces an ammonia molecule by converting glutamine to glutamate. PurL transfers the ammonia molecule to FGAR to form FGAM in an ATP-dependent manner. PurS interacts with PurQ and PurL and is thought to assist in the transfer of the ammonia molecule from PurQ to PurL. This Sulfolobus acidocaldarius (strain ATCC 33909 / DSM 639 / JCM 8929 / NBRC 15157 / NCIMB 11770) protein is Phosphoribosylformylglycinamidine synthase subunit PurL.